The sequence spans 206 residues: Large ribosomal subunit protein uL4 (206 aa).

The interval 45-75 is disordered; the sequence is RQGTHSTKTRGEVRGGGRKPWRQKGTGRARQ. Over residues 60–71 the composition is skewed to basic residues; it reads GGRKPWRQKGTG.

The protein belongs to the universal ribosomal protein uL4 family. In terms of assembly, part of the 50S ribosomal subunit.

In terms of biological role, one of the primary rRNA binding proteins, this protein initially binds near the 5'-end of the 23S rRNA. It is important during the early stages of 50S assembly. It makes multiple contacts with different domains of the 23S rRNA in the assembled 50S subunit and ribosome. Functionally, forms part of the polypeptide exit tunnel. This Thermoanaerobacter pseudethanolicus (strain ATCC 33223 / 39E) (Clostridium thermohydrosulfuricum) protein is Large ribosomal subunit protein uL4.